The primary structure comprises 93 residues: Acylphosphatase (93 aa).

In terms of domain architecture, Acylphosphatase-like spans Arg-7–Arg-93. Residues Arg-22 and Asn-40 contribute to the active site.

It belongs to the acylphosphatase family.

It catalyses the reaction an acyl phosphate + H2O = a carboxylate + phosphate + H(+). This Mycobacterium tuberculosis (strain ATCC 25177 / H37Ra) protein is Acylphosphatase (acyP).